A 207-amino-acid polypeptide reads, in one-letter code: MNTPVEKPWILGLTGGIGSGKSAAAQHFIDLGIHVVDADHAARWVVEPGRPALAKIAEHFGPDVLQADGTLDRAALRKLIFEVPEQRRWLEALLHPLIAEEIAHHLALAKSPYAILVSPLLIESGQYAMTQRILVIDAPQQLQIERTLQRDQTSEQQVQAILKAQSSREDRISRADDVVVNDRDLAWLHSEVERLHHFYLTLSGGQS.

The region spanning Ile10–Ser207 is the DPCK domain. Gly18 to Ala23 is an ATP binding site.

It belongs to the CoaE family.

The protein localises to the cytoplasm. It carries out the reaction 3'-dephospho-CoA + ATP = ADP + CoA + H(+). It participates in cofactor biosynthesis; coenzyme A biosynthesis; CoA from (R)-pantothenate: step 5/5. Catalyzes the phosphorylation of the 3'-hydroxyl group of dephosphocoenzyme A to form coenzyme A. The polypeptide is Dephospho-CoA kinase (Pseudomonas fluorescens (strain Pf0-1)).